A 221-amino-acid chain; its full sequence is MARRPARCYRYCKNKPYPKSRYNRAVPDSKIRIFDLGRKRAGVDEFPLCIHLVSNEYEQITSEALEAARICANKYLVKIGGKDSFHLRVRAHPFHVVRINKMLSCAGADRLQTGMRHAFGKPNGLVARVNIGQILMSVRTKDSSRATAIEALRRCQYKFPGQQRIIVSKKWGFSQYARDEYIEKRSRGEIIPDGCYAKFLNKRGSLQEKLDLFPEASFNLA.

The protein belongs to the universal ribosomal protein uL16 family. Component of the large ribosomal subunit (LSU). Mature yeast ribosomes consist of a small (40S) and a large (60S) subunit. The 40S small subunit contains 1 molecule of ribosomal RNA (18S rRNA) and at least 33 different proteins. The large 60S subunit contains 3 rRNA molecules (25S, 5.8S and 5S rRNA) and at least 46 different proteins.

It localises to the cytoplasm. Component of the ribosome, a large ribonucleoprotein complex responsible for the synthesis of proteins in the cell. The small ribosomal subunit (SSU) binds messenger RNAs (mRNAs) and translates the encoded message by selecting cognate aminoacyl-transfer RNA (tRNA) molecules. The large subunit (LSU) contains the ribosomal catalytic site termed the peptidyl transferase center (PTC), which catalyzes the formation of peptide bonds, thereby polymerizing the amino acids delivered by tRNAs into a polypeptide chain. The nascent polypeptides leave the ribosome through a tunnel in the LSU and interact with protein factors that function in enzymatic processing, targeting, and the membrane insertion of nascent chains at the exit of the ribosomal tunnel. This chain is Large ribosomal subunit protein uL16A (rpl1001), found in Schizosaccharomyces pombe (strain 972 / ATCC 24843) (Fission yeast).